Reading from the N-terminus, the 158-residue chain is C-type lectin lectoxin-Enh5 (158 aa).

Positions 1–23 are cleaved as a signal peptide; it reads MGQFTVVSLGLLAVFLSLSGAKG. 3 disulfides stabilise this stretch: cysteine 26/cysteine 37, cysteine 54/cysteine 154, and cysteine 129/cysteine 146. A C-type lectin domain is found at 33-155; the sequence is RNGVCNKLFP…CASLHPFICQ (123 aa). The Mannose-binding signature appears at 119–121; sequence EPN. Glutamate 127, asparagine 142, and aspartate 143 together coordinate Ca(2+).

It belongs to the true venom lectin family. In terms of tissue distribution, expressed by the venom gland.

The protein resides in the secreted. Its function is as follows. Mannose-binding lectin which recognizes specific carbohydrate structures and agglutinates a variety of animal cells by binding to cell-surface glycoproteins and glycolipids. May be a calcium-dependent lectin. This Pseudoferania polylepis (Macleay's water snake) protein is C-type lectin lectoxin-Enh5.